Consider the following 120-residue polypeptide: NAD(P)H-quinone oxidoreductase subunit 3, chloroplastic (120 aa).

3 consecutive transmembrane segments (helical) span residues 10-30 (FWFF…TSKL), 64-84 (MFAL…PWAM), and 89-109 (LGVY…IGLV).

The protein belongs to the complex I subunit 3 family. In terms of assembly, NDH is composed of at least 16 different subunits, 5 of which are encoded in the nucleus.

It localises to the plastid. The protein resides in the chloroplast thylakoid membrane. The catalysed reaction is a plastoquinone + NADH + (n+1) H(+)(in) = a plastoquinol + NAD(+) + n H(+)(out). It catalyses the reaction a plastoquinone + NADPH + (n+1) H(+)(in) = a plastoquinol + NADP(+) + n H(+)(out). NDH shuttles electrons from NAD(P)H:plastoquinone, via FMN and iron-sulfur (Fe-S) centers, to quinones in the photosynthetic chain and possibly in a chloroplast respiratory chain. The immediate electron acceptor for the enzyme in this species is believed to be plastoquinone. Couples the redox reaction to proton translocation, and thus conserves the redox energy in a proton gradient. The polypeptide is NAD(P)H-quinone oxidoreductase subunit 3, chloroplastic (Chaetosphaeridium globosum (Charophycean green alga)).